We begin with the raw amino-acid sequence, 415 residues long: Serine--tRNA ligase (415 aa).

230–232 (TAE) is an L-serine binding site. 261–263 (RKE) contributes to the ATP binding site. Glu284 is a binding site for L-serine. 348-351 (EISS) is an ATP binding site. Position 382 (Ser382) interacts with L-serine.

Belongs to the class-II aminoacyl-tRNA synthetase family. Type-1 seryl-tRNA synthetase subfamily. In terms of assembly, homodimer. The tRNA molecule binds across the dimer.

Its subcellular location is the cytoplasm. The catalysed reaction is tRNA(Ser) + L-serine + ATP = L-seryl-tRNA(Ser) + AMP + diphosphate + H(+). It catalyses the reaction tRNA(Sec) + L-serine + ATP = L-seryl-tRNA(Sec) + AMP + diphosphate + H(+). It functions in the pathway aminoacyl-tRNA biosynthesis; selenocysteinyl-tRNA(Sec) biosynthesis; L-seryl-tRNA(Sec) from L-serine and tRNA(Sec): step 1/1. In terms of biological role, catalyzes the attachment of serine to tRNA(Ser). Is also able to aminoacylate tRNA(Sec) with serine, to form the misacylated tRNA L-seryl-tRNA(Sec), which will be further converted into selenocysteinyl-tRNA(Sec). The chain is Serine--tRNA ligase from Sulfurimonas denitrificans (strain ATCC 33889 / DSM 1251) (Thiomicrospira denitrificans (strain ATCC 33889 / DSM 1251)).